The chain runs to 493 residues: Glutamate--tRNA ligase (493 aa).

The short motif at Pro10 to Thr20 is the 'HIGH' region element. The 'KMSKS' region signature appears at Lys251–Arg255. ATP is bound at residue Lys254.

This sequence belongs to the class-I aminoacyl-tRNA synthetase family. Glutamate--tRNA ligase type 1 subfamily. Monomer.

It localises to the cytoplasm. The catalysed reaction is tRNA(Glu) + L-glutamate + ATP = L-glutamyl-tRNA(Glu) + AMP + diphosphate. Its function is as follows. Catalyzes the attachment of glutamate to tRNA(Glu) in a two-step reaction: glutamate is first activated by ATP to form Glu-AMP and then transferred to the acceptor end of tRNA(Glu). The protein is Glutamate--tRNA ligase of Pseudomonas putida (strain W619).